A 205-amino-acid chain; its full sequence is SREBP regulating gene protein (205 aa).

The Cytoplasmic portion of the chain corresponds to 1–16 (MVNLAAMVWRRLLRKR). Residues 17-35 (WVLALVFGLSLVYFLSSTF) traverse the membrane as a helical segment. Residues 36–205 (KQEERAVRDR…GESPPELFPA (170 aa)) lie on the Lumenal side of the membrane. N-linked (GlcNAc...) asparagine glycosylation is present at N67.

Belongs to the SPRING family. In terms of assembly, interacts with SCAP.

Its subcellular location is the golgi apparatus membrane. Functionally, positively regulates hepatic SREBP signaling pathway by modulating the proper localization of SCAP (SREBP cleavage-activating protein) to the endoplasmic reticulum, thereby controlling the level of functional SCAP. This chain is SREBP regulating gene protein, found in Homo sapiens (Human).